The sequence spans 346 residues: Elongation factor Ts (346 aa).

An involved in Mg(2+) ion dislocation from EF-Tu region spans residues 80-83; the sequence is TDFV.

The protein belongs to the EF-Ts family.

The protein localises to the cytoplasm. In terms of biological role, associates with the EF-Tu.GDP complex and induces the exchange of GDP to GTP. It remains bound to the aminoacyl-tRNA.EF-Tu.GTP complex up to the GTP hydrolysis stage on the ribosome. In Streptococcus pyogenes serotype M1, this protein is Elongation factor Ts.